The primary structure comprises 246 residues: tRNA pseudouridine synthase A (246 aa).

Asp-53 acts as the Nucleophile in catalysis. Tyr-112 serves as a coordination point for substrate.

Belongs to the tRNA pseudouridine synthase TruA family. Homodimer.

It catalyses the reaction uridine(38/39/40) in tRNA = pseudouridine(38/39/40) in tRNA. Functionally, formation of pseudouridine at positions 38, 39 and 40 in the anticodon stem and loop of transfer RNAs. This Anaplasma phagocytophilum (strain HZ) protein is tRNA pseudouridine synthase A.